We begin with the raw amino-acid sequence, 322 residues long: Probable 2-oxoglutarate-dependent dioxygenase AOP1 (322 aa).

The 107-residue stretch at 165-271 (TYYLTRLMKY…RYSTGLFSIP (107 aa)) folds into the Fe2OG dioxygenase domain. 3 residues coordinate Fe cation: His195, Asp197, and His252. Arg262 contributes to the 2-oxoglutarate binding site.

It belongs to the iron/ascorbate-dependent oxidoreductase family. Requires Fe(2+) as cofactor.

Its function is as follows. Probable 2-oxoglutarate-dependent dioxygenase that may be involved in glucosinolates biosynthesis. May play a role in the production of aliphatic glucosinolates. The chain is Probable 2-oxoglutarate-dependent dioxygenase AOP1 (AOP1) from Arabidopsis thaliana (Mouse-ear cress).